Reading from the N-terminus, the 294-residue chain is MLVLHNSQKLQILYKSLEKSIPESIKVYGAIFNIKDKNPFNMEVLVDAWPDYQIVITRPQKQEMKDDQDHYTNTYHIFTKAPDKLEEVLSYSNVISWEQTLQIQGCQEGLDEAIRKVATSKSVQVDYMKTILFIPELPKKHKTSSNDKMELFEVDDDNKEGNFSNMFLDASHAGLVNEHWAFGKNERSLKYIERCLQDFLGFGVLGPEGQLVSWIVMEQSCELRMGYTVPKYRHQGNMLQIGYHLEKYLSQKEIPFYFHVADNNEKSLQALNNLGFKICPCGWHQWKCTPKKYC.

K19 carries the post-translational modification N6-acetyllysine.

The protein belongs to the glycine N-acyltransferase family. Post-translationally, acetylation at Lys-19 drastically decreases the production of N-oleoyl and N-arachidonoyl glycines. As to expression, expressed at highest levels in salivary gland and trachea. Also detected in thyroid gland, spinal cord, prostate, lung and fetal brain.

It is found in the endoplasmic reticulum. The catalysed reaction is an acyl-CoA + glycine = an N-acylglycine + CoA + H(+). The enzyme catalyses (9Z)-hexadecenoyl-CoA + glycine = N-(9Z-hexadecenoyl)-glycine + CoA + H(+). It catalyses the reaction octadecanoyl-CoA + glycine = N-octadecanoylglycine + CoA + H(+). It carries out the reaction (5Z,8Z,11Z,14Z)-eicosatetraenoyl-CoA + glycine = N-(5Z,8Z,11Z,14Z)-eicosatetraenoyl-glycine + CoA + H(+). The catalysed reaction is (9Z)-octadecenoyl-CoA + glycine = N-(9Z-octadecenoyl)glycine + CoA + H(+). The enzyme catalyses octanoyl-CoA + glycine = N-octanoylglycine + CoA + H(+). It catalyses the reaction decanoyl-CoA + glycine = N-decanoylglycine + CoA + H(+). It carries out the reaction tetradecanoyl-CoA + glycine = N-tetradecanoylglycine + CoA + H(+). The catalysed reaction is dodecanoyl-CoA + glycine = N-dodecanoylglycine + CoA + H(+). The enzyme catalyses (9Z,12Z)-octadecadienoyl-CoA + glycine = N-(9Z,12Z-octadecadienoyl)-glycine + CoA + H(+). It catalyses the reaction a fatty acyl-CoA + glycine = an N-(fatty acyl)-glycine + CoA + H(+). Its function is as follows. Mitochondrial acyltransferase which transfers the acyl group to the N-terminus of glycine. Conjugates numerous substrates, such as arachidonoyl-CoA and saturated medium and long-chain acyl-CoAs ranging from chain-length C8:0-CoA to C18:0-CoA, to form a variety of N-acylglycines. Shows a preference for monounsaturated fatty acid oleoyl-CoA (C18:1-CoA) as an acyl donor. Does not exhibit any activity toward C22:6-CoA and chenodeoxycholoyl-CoA, nor toward serine or alanine. This Homo sapiens (Human) protein is Glycine N-acyltransferase-like protein 2.